The following is a 199-amino-acid chain: Twist-related protein 1 (199 aa).

Over residues 1-18 the composition is skewed to low complexity; sequence MMQDVSSSPVSPADDSLS. The tract at residues 1-102 is disordered; it reads MMQDVSSSPV…GGGSPQSYEE (102 aa). Residues 34–43 show a composition bias toward basic residues; sequence RGGRKRRSSR. Composition is skewed to gly residues over residues 46 to 65 and 80 to 96; these read AGGG…GGDE and GCGG…GGGS. The 52-residue stretch at 105-156 folds into the bHLH domain; it reads TQRVMANVRERQRTQSLNEAFAALRKIIPTLPSDKLSKIQTLKLAARYIDFL. The interval 158-188 is sufficient for transactivation activity; sequence QVLQSDELDSKMASCSYVAHERLSYAFSVWR.

As to quaternary structure, efficient DNA binding requires dimerization with another bHLH protein. Homodimer or heterodimer with E proteins such as TCF3. ID1 binds preferentially to TCF3 but does not interact efficiently with TWIST1 so ID1 levels control the amount of TCF3 available to dimerize with TWIST and thus determine the type of dimer formed.

It localises to the nucleus. In terms of biological role, acts as a transcriptional regulator. Inhibits myogenesis by sequestrating E proteins, inhibiting trans-activation by MEF2, and inhibiting DNA-binding by MYOD1 through physical interaction. This interaction probably involves the basic domains of both proteins. Also represses expression of pro-inflammatory cytokines such as TNFA and IL1B. Regulates cranial suture patterning and fusion. Activates transcription as a heterodimer with E proteins. Regulates gene expression differentially, depending on dimer composition. Homodimers induce expression of FGFR2 and POSTN while heterodimers repress FGFR2 and POSTN expression and induce THBS1 expression. Heterodimerization is also required for osteoblast differentiation. Represses the activity of the circadian transcriptional activator: NPAS2-BMAL1 heterodimer. The sequence is that of Twist-related protein 1 (TWIST1) from Microcebus murinus (Gray mouse lemur).